A 690-amino-acid polypeptide reads, in one-letter code: Glycine--tRNA ligase beta subunit (690 aa).

The protein belongs to the class-II aminoacyl-tRNA synthetase family. As to quaternary structure, tetramer of two alpha and two beta subunits.

It localises to the cytoplasm. It carries out the reaction tRNA(Gly) + glycine + ATP = glycyl-tRNA(Gly) + AMP + diphosphate. This Proteus mirabilis (strain HI4320) protein is Glycine--tRNA ligase beta subunit.